Consider the following 233-residue polypeptide: Ribitol-5-phosphate cytidylyltransferase (233 aa).

CTP-binding positions include 7–10 (LAGG) and 80–86 (GADRNET).

This sequence belongs to the IspD/TarI cytidylyltransferase family. TarI subfamily.

It catalyses the reaction D-ribitol 5-phosphate + CTP + H(+) = CDP-L-ribitol + diphosphate. It functions in the pathway cell wall biogenesis; poly(ribitol phosphate) teichoic acid biosynthesis. In terms of biological role, catalyzes the transfer of the cytidylyl group of CTP to D-ribitol 5-phosphate. The sequence is that of Ribitol-5-phosphate cytidylyltransferase from Lactiplantibacillus plantarum (strain ATCC BAA-793 / NCIMB 8826 / WCFS1) (Lactobacillus plantarum).